A 175-amino-acid chain; its full sequence is Granulocyte colony-stimulating factor (175 aa).

2 disulfides stabilise this stretch: C37–C43 and C65–C75. Residue T134 is glycosylated (O-linked (GalNAc...) threonine).

It belongs to the IL-6 superfamily. Monomer. In terms of processing, O-glycosylated.

The protein resides in the secreted. Granulocyte/macrophage colony-stimulating factors are cytokines that act in hematopoiesis by controlling the production, differentiation, and function of 2 related white cell populations of the blood, the granulocytes and the monocytes-macrophages. This CSF induces granulocytes. This Canis lupus familiaris (Dog) protein is Granulocyte colony-stimulating factor (CSF3).